We begin with the raw amino-acid sequence, 339 residues long: Biotin synthase (339 aa).

A Radical SAM core domain is found at 51-278 (SEVELATLLS…KARVRLSAGR (228 aa)). [4Fe-4S] cluster-binding residues include C66, C70, and C73. The [2Fe-2S] cluster site is built by C110, C141, C201, and R273.

This sequence belongs to the radical SAM superfamily. Biotin synthase family. Homodimer. Requires [4Fe-4S] cluster as cofactor. The cofactor is [2Fe-2S] cluster.

The catalysed reaction is (4R,5S)-dethiobiotin + (sulfur carrier)-SH + 2 reduced [2Fe-2S]-[ferredoxin] + 2 S-adenosyl-L-methionine = (sulfur carrier)-H + biotin + 2 5'-deoxyadenosine + 2 L-methionine + 2 oxidized [2Fe-2S]-[ferredoxin]. It functions in the pathway cofactor biosynthesis; biotin biosynthesis; biotin from 7,8-diaminononanoate: step 2/2. Functionally, catalyzes the conversion of dethiobiotin (DTB) to biotin by the insertion of a sulfur atom into dethiobiotin via a radical-based mechanism. The protein is Biotin synthase of Herminiimonas arsenicoxydans.